Reading from the N-terminus, the 390-residue chain is Pre-mycofactocin synthase (390 aa).

In terms of domain architecture, FMN hydroxy acid dehydrogenase spans 1–383 (MADEWFETVA…RSDDILIPAD (383 aa)). Residues S108, Q128, T156, and K254 each coordinate FMN. H278 (proton acceptor) is an active-site residue. FMN-binding positions include 309–313 (DGGIR) and 332–333 (GR).

It belongs to the FMN-dependent alpha-hydroxy acid dehydrogenase family. The cofactor is FMN.

It catalyses the reaction 3-amino-5-[(4-hydroxyphenyl)methyl]-4,4-dimethyl-2-pyrrolidin-2-one + O2 + H2O = pre-mycofactocin + H2O2 + NH4(+). Its function is as follows. Involved in the biosynthesis of the enzyme cofactor mycofactocin (MFT). Catalyzes the oxidative deamination of AHDP (3-amino-5-[(4-hydroxyphenyl)methyl]-4,4-dimethyl-2-pyrrolidin-2-one), forming an alpha-keto amide moiety on the resulting molecule, which is called pre-mycofactocin (PMFT). This reaction occurs via a 5-[(4-hydroxyphenyl)methyl]-3-imino-4,4-dimethylpyrrolidin-2-one intermediate, which converts to PMFT. The alpha-keto amide moiety is the redox-active center for the redox activity of mycofactocin. This is Pre-mycofactocin synthase from Mycobacterium ulcerans (strain Agy99).